Here is a 652-residue protein sequence, read N- to C-terminus: O-fucosyltransferase 15 (652 aa).

The chain crosses the membrane as a helical; Signal-anchor for type II membrane protein span at residues 91–111 (TAAFVIVLVGFFIFVNWFMLS). Asparagine 139, asparagine 169, and asparagine 251 each carry an N-linked (GlcNAc...) asparagine glycan. 426–428 (HLR) is a binding site for substrate. N-linked (GlcNAc...) asparagine glycans are attached at residues asparagine 464, asparagine 546, and asparagine 607.

Belongs to the glycosyltransferase GT106 family.

The protein resides in the membrane. Its pathway is glycan metabolism. The polypeptide is O-fucosyltransferase 15 (Arabidopsis thaliana (Mouse-ear cress)).